Here is a 64-residue protein sequence, read N- to C-terminus: Disintegrin VLO5A (64 aa).

Positions 1–64 (NSGNPCCDPV…SDCPRNPYKD (64 aa)) constitute a Disintegrin domain. Disulfide bonds link Cys-6–Cys-29, Cys-20–Cys-26, Cys-25–Cys-50, and Cys-38–Cys-57. The Cell attachment site; atypical (VGD) signature appears at 42–44 (VGD).

This sequence belongs to the venom metalloproteinase (M12B) family. P-II subfamily. P-IIe sub-subfamily. As to quaternary structure, heterodimer with VLO5B; disulfide-linked. As to expression, expressed by the venom gland.

It is found in the secreted. Its function is as follows. Poor inhibitor of platelet aggregation. The disintegrin inhibits the adhesion of the alpha-4/beta-1 (ITGA4/ITGB1) integrin to VCAM-1. Inhibition on alpha-IIb/beta-3 (ITGA2B/ITGB3) is low. This Macrovipera lebetina obtusa (Levant blunt-nosed viper) protein is Disintegrin VLO5A.